The primary structure comprises 280 residues: Threonylcarbamoyl-AMP synthase (280 aa).

A mitochondrion-targeting transit peptide spans 1 to 56; that stretch reads MSTARPCAGLRAAVAAGMGLSDGPAGSSRGCRLLRPPAPAPALPGARLLRLPESEA. A Phosphoserine modification is found at serine 61. In terms of domain architecture, YrdC-like spans 68–258; sequence TEALRAAVAE…KFGIIRSGCA (191 aa).

This sequence belongs to the SUA5 family. In terms of assembly, interacts with RSC1A1.

It is found in the cytoplasm. Its subcellular location is the mitochondrion. The protein resides in the cell membrane. The enzyme catalyses L-threonine + hydrogencarbonate + ATP = L-threonylcarbamoyladenylate + diphosphate + H2O. In terms of biological role, cytoplasmic and mitochondrial threonylcarbamoyl-AMP synthase required for the formation of a threonylcarbamoyl group on adenosine at position 37 (t(6)A37) in tRNAs that read codons beginning with adenine. Catalyzes the conversion of L-threonine, HCO(3)(-)/CO(2) and ATP to give threonylcarbamoyl-AMP (TC-AMP) as the acyladenylate intermediate, with the release of diphosphate. Participates in t(6)A37 formation in cytoplasmic and mitochondrial tRNAs. May regulate the activity of some transporters. In Rattus norvegicus (Rat), this protein is Threonylcarbamoyl-AMP synthase.